Consider the following 189-residue polypeptide: Chitin synthase 2 (189 aa).

Belongs to the chitin synthase family. Class II subfamily.

The protein localises to the cell membrane. It carries out the reaction [(1-&gt;4)-N-acetyl-beta-D-glucosaminyl](n) + UDP-N-acetyl-alpha-D-glucosamine = [(1-&gt;4)-N-acetyl-beta-D-glucosaminyl](n+1) + UDP + H(+). Polymerizes chitin, a structural polymer of the cell wall and septum, by transferring the sugar moiety of UDP-GlcNAc to the non-reducing end of the growing chitin polymer. The protein is Chitin synthase 2 (CHS2) of Xylohypha bantiana.